Reading from the N-terminus, the 446-residue chain is ATP-dependent protease ATPase subunit HslU (446 aa).

ATP is bound by residues Val18, 60–65 (GVGKTE), Asp259, Glu324, and Arg396.

The protein belongs to the ClpX chaperone family. HslU subfamily. As to quaternary structure, a double ring-shaped homohexamer of HslV is capped on each side by a ring-shaped HslU homohexamer. The assembly of the HslU/HslV complex is dependent on binding of ATP.

Its subcellular location is the cytoplasm. Its function is as follows. ATPase subunit of a proteasome-like degradation complex; this subunit has chaperone activity. The binding of ATP and its subsequent hydrolysis by HslU are essential for unfolding of protein substrates subsequently hydrolyzed by HslV. HslU recognizes the N-terminal part of its protein substrates and unfolds these before they are guided to HslV for hydrolysis. The chain is ATP-dependent protease ATPase subunit HslU from Acidovorax sp. (strain JS42).